Consider the following 430-residue polypeptide: Meiotically up-regulated gene 132 protein (430 aa).

Belongs to the UPF0300 family.

Its subcellular location is the mitochondrion. In terms of biological role, has a role in meiosis. This chain is Meiotically up-regulated gene 132 protein (mug132), found in Schizosaccharomyces pombe (strain 972 / ATCC 24843) (Fission yeast).